Consider the following 479-residue polypeptide: GMP reductase (479 aa).

CBS domains are found at residues 96 to 153 and 154 to 212; these read VLDT…VRDI and AVTD…ATDS. NADP(+)-binding positions include 246-248 and 296-298; these read DTA and GVG. Residue Cys-303 is the Thioimidate intermediate of the active site.

The protein belongs to the IMPDH/GMPR family. GuaB1 subfamily. A monovalent cation is required as a cofactor.

It carries out the reaction IMP + NH4(+) + NADP(+) = GMP + NADPH + 2 H(+). It participates in purine metabolism; IMP biosynthesis via salvage pathway. In terms of biological role, involved in the purine-salvage pathway. Catalyzes the NADPH-dependent conversion of GMP to IMP. In Mycobacterium bovis (strain ATCC BAA-935 / AF2122/97), this protein is GMP reductase.